The primary structure comprises 830 residues: uncharacterized protein (830 aa).

Disordered regions lie at residues Met-1–Cys-28, Arg-70–Ala-147, and Ala-186–Leu-210. Positions Asn-10–Ile-27 are enriched in polar residues. Low complexity-rich tracts occupy residues Gln-100–Ser-130 and Ala-186–Ser-199. Polar residues predominate over residues Glu-200–Leu-210. Transmembrane regions (helical) follow at residues Trp-505–Gly-525, Asp-529–Pro-549, Phe-551–Arg-571, Phe-584–Phe-604, Met-622–Leu-642, Ile-659–Leu-679, Ile-691–Gly-711, Ile-715–Ile-735, Phe-740–Gly-760, and Ile-802–Gly-822.

It belongs to the ThrE exporter (TC 2.A.79) family.

It is found in the cell membrane. Its subcellular location is the cell tip. This is an uncharacterized protein from Schizosaccharomyces pombe (strain 972 / ATCC 24843) (Fission yeast).